A 1112-amino-acid chain; its full sequence is DNA repair protein rad13 (1112 aa).

Positions 1-95 are N-domain; the sequence is MGVSGLWDIL…QTIQKRQARR (95 aa). Residues D30 and D77 each coordinate Mg(2+). A UIM domain is found at 395–414; it reads TDDLILQLATQQSLEENKKS. Positions 742–870 are I-domain; sequence KRSEKRDADE…LALEILHEFP (129 aa). 5 residues coordinate Mg(2+): E777, E779, D798, D800, and D849. Residues 1056 to 1112 form a disordered region; sequence KMMASKNSSDSDSDSEDNFLASLTPKTNSSSISIENLPRKTKLSTSLLKKPSKRRRK. Residues 1079–1089 show a composition bias toward polar residues; that stretch reads TPKTNSSSISI.

This sequence belongs to the XPG/RAD2 endonuclease family. XPG subfamily. Mg(2+) is required as a cofactor.

It is found in the nucleus. Single-stranded DNA endonuclease involved in excision repair of DNA damaged with UV light, bulky adducts, or cross-linking agents. Essential for the incision step of excision-repair. The protein is DNA repair protein rad13 (rad13) of Schizosaccharomyces pombe (strain 972 / ATCC 24843) (Fission yeast).